The primary structure comprises 258 residues: Ribosomal RNA small subunit methyltransferase A (258 aa).

S-adenosyl-L-methionine-binding residues include histidine 13, leucine 15, glycine 40, glutamate 61, aspartate 86, and asparagine 106.

The protein belongs to the class I-like SAM-binding methyltransferase superfamily. rRNA adenine N(6)-methyltransferase family. RsmA subfamily.

It is found in the cytoplasm. The enzyme catalyses adenosine(1518)/adenosine(1519) in 16S rRNA + 4 S-adenosyl-L-methionine = N(6)-dimethyladenosine(1518)/N(6)-dimethyladenosine(1519) in 16S rRNA + 4 S-adenosyl-L-homocysteine + 4 H(+). In terms of biological role, specifically dimethylates two adjacent adenosines (A1518 and A1519) in the loop of a conserved hairpin near the 3'-end of 16S rRNA in the 30S particle. May play a critical role in biogenesis of 30S subunits. This chain is Ribosomal RNA small subunit methyltransferase A, found in Coxiella burnetii (strain RSA 331 / Henzerling II).